The sequence spans 100 residues: MIGLTHYLILASLVFVIGLVGIMRRRNLIMLFFSSEILLNSANIALAAISKYYFDLTGQIIAFFIVAIAASEVAVGLGLLVLWYKKTGSISLDSMTNMKG.

The next 3 helical transmembrane spans lie at 2-22 (IGLTHYLILASLVFVIGLVGI), 29-49 (IMLFFSSEILLNSANIALAAI), and 60-80 (IIAFFIVAIAASEVAVGLGLL).

It belongs to the complex I subunit 4L family. In terms of assembly, NDH-1 is composed of 14 different subunits. Subunits NuoA, H, J, K, L, M, N constitute the membrane sector of the complex.

The protein localises to the cell inner membrane. The catalysed reaction is a quinone + NADH + 5 H(+)(in) = a quinol + NAD(+) + 4 H(+)(out). Its function is as follows. NDH-1 shuttles electrons from NADH, via FMN and iron-sulfur (Fe-S) centers, to quinones in the respiratory chain. The immediate electron acceptor for the enzyme in this species is believed to be ubiquinone. Couples the redox reaction to proton translocation (for every two electrons transferred, four hydrogen ions are translocated across the cytoplasmic membrane), and thus conserves the redox energy in a proton gradient. The chain is NADH-quinone oxidoreductase subunit K from Campylobacter concisus (strain 13826).